Consider the following 320-residue polypeptide: Ferrochelatase (320 aa).

Fe cation-binding residues include histidine 194 and glutamate 275.

The protein belongs to the ferrochelatase family. In terms of assembly, monomer.

It is found in the cytoplasm. It catalyses the reaction heme b + 2 H(+) = protoporphyrin IX + Fe(2+). The protein operates within porphyrin-containing compound metabolism; protoheme biosynthesis; protoheme from protoporphyrin-IX: step 1/1. Its function is as follows. Catalyzes the ferrous insertion into protoporphyrin IX. The sequence is that of Ferrochelatase from Escherichia coli O45:K1 (strain S88 / ExPEC).